The chain runs to 104 residues: Replication factor A protein 3 (104 aa).

It belongs to the replication factor A protein 3 family. As to quaternary structure, component of the heterotrimeric canonical replication protein A complex (RPA).

It is found in the nucleus. Its function is as follows. As part of the replication protein A (RPA/RP-A), a single-stranded DNA-binding heterotrimeric complex, may play an essential role in DNA replication, recombination and repair. Binds and stabilizes single-stranded DNA intermediates, preventing complementary DNA reannealing and recruiting different proteins involved in DNA metabolism. This Schizosaccharomyces pombe (strain 972 / ATCC 24843) (Fission yeast) protein is Replication factor A protein 3 (ssb3).